The sequence spans 977 residues: Receptor protein-tyrosine kinase CEPR2 (977 aa).

The first 31 residues, 1–31 (MSRRPDLLRGSVVATVAATFLLFIFPPNVES), serve as a signal peptide directing secretion. The Extracellular portion of the chain corresponds to 32–620 (TVEKQALFRF…NVKRNSSLDG (589 aa)). N85 is a glycosylation site (N-linked (GlcNAc...) asparagine). 20 LRR repeats span residues 97–121 (LTKL…IVNC), 122–146 (KNLK…PLKS), 148–167 (EILD…WIGN), 168–192 (MNQL…SIGG), 193–217 (LKKL…IFDL), 219–241 (ALDT…ISRL), 242–265 (VNLT…IKNL), 266–288 (TRLR…ELGV), 290–312 (KELR…GFGD), 313–338 (LSHL…GRFS), 340–361 (LDTV…LCQN), 363–385 (KLQF…YGEC), 386–409 (KSLL…FWSL), 411–433 (LAKM…IGLS), 434–457 (TELS…LGRL), 458–481 (TNIE…VGDL), 482–504 (KELS…ELKN), 506–529 (VKLV…LSQI), 530–553 (ASLN…LVKL), and 555–576 (LSFI…LLAV). N-linked (GlcNAc...) asparagine glycosylation occurs at N128. An N-linked (GlcNAc...) asparagine glycan is attached at N205. N243, N251, and N264 each carry an N-linked (GlcNAc...) asparagine glycan. N-linked (GlcNAc...) asparagine glycosylation is found at N301 and N325. 2 N-linked (GlcNAc...) asparagine glycosylation sites follow: N469 and N491. N615 carries an N-linked (GlcNAc...) asparagine glycan. A helical transmembrane segment spans residues 621 to 641 (TLLFLALAIVVVVLVSGLFAL). Topologically, residues 642 to 977 (RYRVVKIREL…SQDTTGKITV (336 aa)) are cytoplasmic. One can recognise a Protein kinase domain in the interval 683 to 965 (LDEDHVIGSG…RKLDDADPCV (283 aa)). ATP-binding positions include 689–697 (IGSGSAGKV) and K712. Y801 carries the phosphotyrosine modification. D814 functions as the Proton acceptor in the catalytic mechanism. A Phosphoserine modification is found at S846. Y854 and Y861 each carry phosphotyrosine.

The protein belongs to the protein kinase superfamily. Ser/Thr protein kinase family. As to quaternary structure, interacts with the root-derived peptide CEP1. Binds to the ammonium transporter AMT1-1. In terms of tissue distribution, expressed in mature leaves, primary roots, and the root tips of both primary and lateral roots.

The protein localises to the cell membrane. The enzyme catalyses L-tyrosyl-[protein] + ATP = O-phospho-L-tyrosyl-[protein] + ADP + H(+). Receptor kinase involved in the perception of C-terminally encoded plant signaling peptide (CEP) and subsequent regulation of root and shoot development. Together with CEPR1, mediates systemic nitrogen (N)-demand signaling upon the perception of root-derived peptides (e.g. CEP1) via the up-regulation of genes involved in N uptake and assimilation pathways. This is Receptor protein-tyrosine kinase CEPR2 from Arabidopsis thaliana (Mouse-ear cress).